A 320-amino-acid chain; its full sequence is Delta-aminolevulinic acid dehydratase (320 aa).

3 residues coordinate Zn(2+): Cys-119, Cys-121, and Cys-129. Catalysis depends on Lys-194, which acts as the Schiff-base intermediate with substrate. 5-aminolevulinate is bound by residues Arg-204 and Arg-216. Residue Glu-232 coordinates Mg(2+). Lys-247 serves as the catalytic Schiff-base intermediate with substrate. A 5-aminolevulinate-binding site is contributed by Ser-273.

It belongs to the ALAD family. As to quaternary structure, homooctamer. Zn(2+) serves as cofactor.

It catalyses the reaction 2 5-aminolevulinate = porphobilinogen + 2 H2O + H(+). It functions in the pathway porphyrin-containing compound metabolism; protoporphyrin-IX biosynthesis; coproporphyrinogen-III from 5-aminolevulinate: step 1/4. Functionally, catalyzes an early step in the biosynthesis of tetrapyrroles. Binds two molecules of 5-aminolevulinate per subunit, each at a distinct site, and catalyzes their condensation to form porphobilinogen. In Methanothermus sociabilis, this protein is Delta-aminolevulinic acid dehydratase (hemB).